The chain runs to 852 residues: Lon protease homolog 2, peroxisomal (852 aa).

The residue at position 2 (Ser2) is an N-acetylserine. One can recognise a Lon N-terminal domain in the interval Leu13–Ile222. Gly375 to Thr382 lines the ATP pocket. The Lon proteolytic domain maps to Leu651–Gly837. Residues Ser743 and Lys786 contribute to the active site. The short motif at Ser850–Leu852 is the Microbody targeting signal element.

Belongs to the peptidase S16 family. In terms of assembly, interacts with PEX5. Interacts with TYSND1. May interact with enzymes involved in beta-oxidation of fatty acids, including ACOX1/AOX. As to expression, widely expressed, with high levels in the liver, kidney and pancreas.

The protein resides in the peroxisome matrix. It catalyses the reaction Hydrolysis of proteins in presence of ATP.. Functionally, ATP-dependent serine protease that mediates the selective degradation of misfolded and unassembled polypeptides in the peroxisomal matrix. Necessary for type 2 peroxisome targeting signal (PTS2)-containing protein processing and facilitates peroxisome matrix protein import. May indirectly regulate peroxisomal fatty acid beta-oxidation through degradation of the self-processed forms of TYSND1. The protein is Lon protease homolog 2, peroxisomal of Homo sapiens (Human).